A 306-amino-acid chain; its full sequence is Serine/threonine-protein phosphatase PP-X homolog 4 (306 aa).

Mn(2+)-binding residues include Asp53, His55, Asp81, and Asn113. The active-site Proton donor is His114. 2 residues coordinate Mn(2+): His163 and His237.

The protein belongs to the PPP phosphatase family. PP-4 (PP-X) subfamily. The cofactor is Mn(2+).

The enzyme catalyses O-phospho-L-seryl-[protein] + H2O = L-seryl-[protein] + phosphate. It catalyses the reaction O-phospho-L-threonyl-[protein] + H2O = L-threonyl-[protein] + phosphate. This Paramecium tetraurelia protein is Serine/threonine-protein phosphatase PP-X homolog 4 (Ppx4).